Consider the following 79-residue polypeptide: uncharacterized protein (79 aa).

It belongs to the asfivirus D79L family.

This is an uncharacterized protein from African swine fever virus (strain Badajoz 1971 Vero-adapted) (Ba71V).